A 305-amino-acid polypeptide reads, in one-letter code: Olfactory receptor 4X1 (305 aa).

Topologically, residues 1-23 are extracellular; that stretch reads MVATNNVTEIIFVGFSQNWSEQR. Asn-6 and Asn-18 each carry an N-linked (GlcNAc...) asparagine glycan. Residues 24 to 47 form a helical membrane-spanning segment; sequence VISVMFLLMYTAVVLGNGLIVVTI. At 48-55 the chain is on the cytoplasmic side; the sequence is LASKVLTS. A helical transmembrane segment spans residues 56-77; that stretch reads PMYFFLSYLSFVEICYCSVMAP. The Extracellular portion of the chain corresponds to 78–98; the sequence is KLIFDSFIKRKVISLKGCLTQ. A disulfide bridge connects residues Cys-95 and Cys-187. Residues 99–118 traverse the membrane as a helical segment; sequence MFSLHFFGGTEAFLLMVMAY. Residues 119-137 are Cytoplasmic-facing; sequence DRYVAICKPLHYMAIMNQR. Residues 138–156 traverse the membrane as a helical segment; sequence MCGLLVRIAWGGGLLHSVG. Topologically, residues 157-193 are extracellular; sequence QTFLIFQLPFCGPNIMDHYFCDVHPVLELACADTFFI. The helical transmembrane segment at 194–217 threads the bilayer; the sequence is SLLIITNGGSISVVSFFVLMASYL. Topologically, residues 218 to 233 are cytoplasmic; the sequence is IILHFLRSHNLEGQHK. A helical membrane pass occupies residues 234 to 256; it reads ALSTCASHVTVVDLFFIPCSLVY. Residues 257-267 lie on the Extracellular side of the membrane; that stretch reads IRPCVTLPADK. The helical transmembrane segment at 268–287 threads the bilayer; the sequence is IVAVFYTVVTPLLNPVIYSF. Over 288–305 the chain is Cytoplasmic; the sequence is RNAEVKNAMRRFIGGKVI.

It belongs to the G-protein coupled receptor 1 family.

It localises to the cell membrane. Functionally, odorant receptor. The polypeptide is Olfactory receptor 4X1 (OR4X1) (Homo sapiens (Human)).